Here is a 130-residue protein sequence, read N- to C-terminus: uncharacterized protein (130 aa).

This is an uncharacterized protein from Sinorhizobium fredii (strain NBRC 101917 / NGR234).